The sequence spans 513 residues: ATP synthase subunit alpha (513 aa).

169–176 contacts ATP; that stretch reads GDRQTGKT.

Belongs to the ATPase alpha/beta chains family. In terms of assembly, F-type ATPases have 2 components, CF(1) - the catalytic core - and CF(0) - the membrane proton channel. CF(1) has five subunits: alpha(3), beta(3), gamma(1), delta(1), epsilon(1). CF(0) has three main subunits: a(1), b(2) and c(9-12). The alpha and beta chains form an alternating ring which encloses part of the gamma chain. CF(1) is attached to CF(0) by a central stalk formed by the gamma and epsilon chains, while a peripheral stalk is formed by the delta and b chains.

The protein localises to the cell inner membrane. The enzyme catalyses ATP + H2O + 4 H(+)(in) = ADP + phosphate + 5 H(+)(out). In terms of biological role, produces ATP from ADP in the presence of a proton gradient across the membrane. The alpha chain is a regulatory subunit. The sequence is that of ATP synthase subunit alpha from Shewanella baltica (strain OS223).